Here is a 203-residue protein sequence, read N- to C-terminus: LexA repressor (203 aa).

Positions 29–49 (VREIGQEVGLSSSSTVHGYLK) form a DNA-binding region, H-T-H motif. Catalysis depends on for autocatalytic cleavage activity residues S126 and K163.

Belongs to the peptidase S24 family. In terms of assembly, homodimer.

The catalysed reaction is Hydrolysis of Ala-|-Gly bond in repressor LexA.. Its function is as follows. Represses a number of genes involved in the response to DNA damage (SOS response), including recA and lexA. In the presence of single-stranded DNA, RecA interacts with LexA causing an autocatalytic cleavage which disrupts the DNA-binding part of LexA, leading to derepression of the SOS regulon and eventually DNA repair. This is LexA repressor from Pelotomaculum thermopropionicum (strain DSM 13744 / JCM 10971 / SI).